The sequence spans 305 residues: Ornithine carbamoyltransferase (305 aa).

Carbamoyl phosphate contacts are provided by residues 48-51 (STRT), R99, and 126-129 (HPCQ). Residues N157, D222, and 226-227 (SM) each bind L-ornithine. Residues 262–263 (CL) and R290 each bind carbamoyl phosphate.

This sequence belongs to the aspartate/ornithine carbamoyltransferase superfamily. OTCase family.

It is found in the cytoplasm. The enzyme catalyses carbamoyl phosphate + L-ornithine = L-citrulline + phosphate + H(+). It participates in amino-acid biosynthesis; L-arginine biosynthesis; L-arginine from L-ornithine and carbamoyl phosphate: step 1/3. Reversibly catalyzes the transfer of the carbamoyl group from carbamoyl phosphate (CP) to the N(epsilon) atom of ornithine (ORN) to produce L-citrulline. In Methanocaldococcus jannaschii (strain ATCC 43067 / DSM 2661 / JAL-1 / JCM 10045 / NBRC 100440) (Methanococcus jannaschii), this protein is Ornithine carbamoyltransferase (argF).